The sequence spans 219 residues: Transcriptional activator protein rep2 (219 aa).

Residues 177 to 197 fold into a zinc finger; sequence CSKCNTTFNHSTALMMHEATC.

Functionally, transcriptional activator which interacts with the mcb binding subunit complex formed by res2 and cdc10. Rep2 is required for the mitotic cell cycle start. The polypeptide is Transcriptional activator protein rep2 (rep2) (Schizosaccharomyces pombe (strain 972 / ATCC 24843) (Fission yeast)).